Consider the following 502-residue polypeptide: Mannitol 2-dehydrogenase (502 aa).

37–48 (IVHVGVGGFHRA) serves as a coordination point for NAD(+).

Belongs to the mannitol dehydrogenase family. Monomer.

The enzyme catalyses D-mannitol + NAD(+) = D-fructose + NADH + H(+). In terms of biological role, catalyzes the NAD(H)-dependent interconversion of D-fructose and D-mannitol in the mannitol metabolic pathway. The protein is Mannitol 2-dehydrogenase of Aspergillus terreus (strain NIH 2624 / FGSC A1156).